Reading from the N-terminus, the 213-residue chain is Octanoyltransferase (213 aa).

A BPL/LPL catalytic domain is found at 32-207 (ENTPDEIWLV…NILALLNNPP (176 aa)). Substrate-binding positions include 71–78 (RGGQVTYH), 138–140 (SLG), and 151–153 (GLA). Cys-169 acts as the Acyl-thioester intermediate in catalysis.

This sequence belongs to the LipB family.

The protein localises to the cytoplasm. The enzyme catalyses octanoyl-[ACP] + L-lysyl-[protein] = N(6)-octanoyl-L-lysyl-[protein] + holo-[ACP] + H(+). It functions in the pathway protein modification; protein lipoylation via endogenous pathway; protein N(6)-(lipoyl)lysine from octanoyl-[acyl-carrier-protein]: step 1/2. Functionally, catalyzes the transfer of endogenously produced octanoic acid from octanoyl-acyl-carrier-protein onto the lipoyl domains of lipoate-dependent enzymes. Lipoyl-ACP can also act as a substrate although octanoyl-ACP is likely to be the physiological substrate. This is Octanoyltransferase from Citrobacter koseri (strain ATCC BAA-895 / CDC 4225-83 / SGSC4696).